We begin with the raw amino-acid sequence, 71 residues long: Large ribosomal subunit protein eL38 (71 aa).

Belongs to the eukaryotic ribosomal protein eL38 family.

This chain is Large ribosomal subunit protein eL38 (RpL38), found in Ixodes scapularis (Black-legged tick).